The following is a 34-amino-acid chain: Photosystem I reaction center subunit XII (34 aa).

Residues 9 to 29 (LIILGLIVVMHAGVLALRLGI) form a helical membrane-spanning segment.

Belongs to the PsaM family.

Its subcellular location is the cellular thylakoid membrane. This chain is Photosystem I reaction center subunit XII, found in Prochlorococcus marinus subsp. pastoris (strain CCMP1986 / NIES-2087 / MED4).